Here is a 503-residue protein sequence, read N- to C-terminus: Transcriptional regulator LovE (503 aa).

Residues 35 to 67 constitute a DNA-binding region (zn(2)-C6 fungal-type); it reads CDRCHAQKIKCTGNKEVTGRAPCQRCQQAGLRC. Disordered stretches follow at residues 89 to 124 and 331 to 358; these read ADPD…RQFL and SHMS…HSSV. The segment covering 339–357 has biased composition (low complexity); that stretch reads SRSQSPSRDDTSSSSGHSS.

It localises to the nucleus. Its function is as follows. Transcription factor that regulates the expression of the he gene cluster that mediates the biosynthesis of lovastatin (also known as mevinolin, mevacor or monacolin K), a hypolipidemic inhibitor of (3S)-hydroxymethylglutaryl-coenzyme A (HMG-CoA) reductase (HMGR). The chain is Transcriptional regulator LovE from Aspergillus terreus.